The chain runs to 156 residues: Protein S100-A9 (156 aa).

EF-hand domains are found at residues 16 to 51 (INIF…FLKK) and 54 to 89 (KNEA…LTVA). H20 contacts Zn(2+). Positions 23, 26, and 28 each coordinate Ca(2+). D30 is a binding site for Zn(2+). 7 residues coordinate Ca(2+): T31, E36, D67, N69, D71, Q73, and E78. The Zn(2+) site is built by H91 and H95. The segment at 94–156 (MHNTAPPGQG…HSHGGHGHSH (63 aa)) is disordered. The residue at position 106 (H106) is a Pros-methylhistidine. Gly residues predominate over residues 108 to 119 (PGYGKGGSGSCS). Positions 135-156 (GHGHGHSHGGHGHSHGGHGHSH) are enriched in basic residues.

This sequence belongs to the S-100 family. In terms of assembly, homodimer. Preferentially exists as a heterodimer or heterotetramer with S100A8 known as calprotectin (S100A8/A9). S100A9 interacts with ATP2A2. S100A9 interacts with AGER, and with the heterodimeric complex formed by TLR4 and LY96 in the presence of calcium and/or zinc ions. S100A9 binds quinoline-3-carboxamides in the presence of calcium and/or zinc ions. S100A9 interacts with amyloid-beta protein 40. Calprotectin (S100A8/9) interacts with CEACAM3 and tubulin filaments in a calcium-dependent manner. Heterotetrameric calprotectin (S100A8/A9) interacts with ANXA6 and associates with tubulin filaments in activated monocytes. Calprotectin (S100A8/9) interacts with NCF2/P67PHOX, RAC1, RAC2, CYBA and CYBB. Calprotectin (S100A8/9) interacts with NOS2 to form the iNOS-S100A8/A9 transnitrosylase complex; induced by LDL(ox). Calprotectin (S100A8/9) interacts with CD69. Post-translationally, phosphorylated. Phosphorylation inhibits activation of tubulin polymerization. In terms of processing, methylation at His-106 by METTL9 reduces zinc-binding without affecting heterodimerization with S100A8. In terms of tissue distribution, found essentially in phagocytic cells.

It is found in the secreted. Its subcellular location is the cytoplasm. The protein localises to the cytoskeleton. It localises to the cell membrane. Functionally, S100A9 is a calcium- and zinc-binding protein which plays a prominent role in the regulation of inflammatory processes and immune response. It can induce neutrophil chemotaxis, adhesion, can increase the bactericidal activity of neutrophils by promoting phagocytosis via activation of SYK, PI3K/AKT, and ERK1/2 and can induce degranulation of neutrophils by a MAPK-dependent mechanism. Predominantly found as calprotectin (S100A8/A9) which has a wide plethora of intra- and extracellular functions. The intracellular functions include: facilitating leukocyte arachidonic acid trafficking and metabolism, modulation of the tubulin-dependent cytoskeleton during migration of phagocytes and activation of the neutrophilic NADPH-oxidase. Also participates in regulatory T-cell differentiation together with CD69. Activates NADPH-oxidase by facilitating the enzyme complex assembly at the cell membrane, transferring arachidonic acid, an essential cofactor, to the enzyme complex and S100A8 contributes to the enzyme assembly by directly binding to NCF2/P67PHOX. The extracellular functions involve pro-inflammatory, antimicrobial, oxidant-scavenging and apoptosis-inducing activities. Its pro-inflammatory activity includes recruitment of leukocytes, promotion of cytokine and chemokine production, and regulation of leukocyte adhesion and migration. Acts as an alarmin or a danger associated molecular pattern (DAMP) molecule and stimulates innate immune cells via binding to pattern recognition receptors such as Toll-like receptor 4 (TLR4) and receptor for advanced glycation endproducts (AGER). Binding to TLR4 and AGER activates the MAP-kinase and NF-kappa-B signaling pathways resulting in the amplification of the pro-inflammatory cascade. Has antimicrobial activity towards bacteria and fungi and exerts its antimicrobial activity probably via chelation of Zn(2+) which is essential for microbial growth. Can induce cell death via autophagy and apoptosis and this occurs through the cross-talk of mitochondria and lysosomes via reactive oxygen species (ROS) and the process involves BNIP3. Can regulate neutrophil number and apoptosis by an anti-apoptotic effect; regulates cell survival via ITGAM/ITGB and TLR4 and a signaling mechanism involving MEK-ERK. Its role as an oxidant scavenger has a protective role in preventing exaggerated tissue damage by scavenging oxidants. The iNOS-S100A8/A9 transnitrosylase complex is proposed to direct selective inflammatory stimulus-dependent S-nitrosylation of multiple targets such as GAPDH, NXA5, EZR, MSN and VIM by recognizing a [IL]-x-C-x-x-[DE] motif. This chain is Protein S100-A9 (S100A9), found in Bos taurus (Bovine).